Consider the following 124-residue polypeptide: Bactoprenol-linked glucose translocase (124 aa).

A run of 4 helical transmembrane segments spans residues 12 to 32 (FFSYFLIGIVNTALHWGVFYA), 45 to 65 (NIVGFICAATFSFFANARCSF), 75 to 95 (FIFIFFMGAMSYLFGVLFDLL), and 96 to 116 (ALSPIFTLFTFSLFSLVLGYC).

This sequence belongs to the GtrA family.

Its subcellular location is the cell membrane. It participates in bacterial outer membrane biogenesis; lipopolysaccharide biosynthesis. Functionally, involved in O antigen modification. Involved in the translocation of bactoprenol-linked glucose across the cytoplasmic membrane. The polypeptide is Bactoprenol-linked glucose translocase (rfbI) (Shigella flexneri).